The chain runs to 143 residues: 3-hydroxyacyl-[acyl-carrier-protein] dehydratase FabZ (143 aa).

His-48 is a catalytic residue.

It belongs to the thioester dehydratase family. FabZ subfamily.

The protein resides in the cytoplasm. The enzyme catalyses a (3R)-hydroxyacyl-[ACP] = a (2E)-enoyl-[ACP] + H2O. Functionally, involved in unsaturated fatty acids biosynthesis. Catalyzes the dehydration of short chain beta-hydroxyacyl-ACPs and long chain saturated and unsaturated beta-hydroxyacyl-ACPs. In Roseiflexus sp. (strain RS-1), this protein is 3-hydroxyacyl-[acyl-carrier-protein] dehydratase FabZ.